Consider the following 76-residue polypeptide: Omega-conotoxin-like Ai6.3 (76 aa).

A signal peptide spans 1–22 (MKLTCLMIVAVLFLTAWTFVTA). Residues 23 to 50 (VPDSSNALENLYLKAHHEMNNPEDSELN) constitute a propeptide that is removed on maturation. Intrachain disulfides connect Cys53/Cys67, Cys60/Cys71, and Cys66/Cys75.

The protein belongs to the conotoxin O1 superfamily. As to expression, expressed by the venom duct.

The protein resides in the secreted. Omega-conotoxins act at presynaptic membranes, they bind and block voltage-gated calcium channels (Cav). This Conus ammiralis (Admiral cone) protein is Omega-conotoxin-like Ai6.3.